The sequence spans 252 residues: Probable endonuclease 4 (252 aa).

Positions 56, 96, 129, 162, 165, 191, 204, 206, and 233 each coordinate Zn(2+).

The protein belongs to the AP endonuclease 2 family. Zn(2+) serves as cofactor.

The catalysed reaction is Endonucleolytic cleavage to 5'-phosphooligonucleotide end-products.. In terms of biological role, endonuclease IV plays a role in DNA repair. It cleaves phosphodiester bonds at apurinic or apyrimidinic (AP) sites, generating a 3'-hydroxyl group and a 5'-terminal sugar phosphate. The protein is Probable endonuclease 4 of Mycobacterium marinum (strain ATCC BAA-535 / M).